A 418-amino-acid polypeptide reads, in one-letter code: MRFAWTALLGSLQLCALVRCAPPAASHRQPPREQAAAPGAWRQKIQWENNGQVFSLLSLGSQYQPQRRRDPGATAPGAANATAPQMRTPILLLRNNRTAAARVRTAGPSAAAAGRPRPAARHWFQAGYSTSGAHDAGTSRADNQTAPGEVPTLSNLRPPNRVEVDGMVGDDPYNPYKYTDDNPYYNYYDTYERPRPGSRYRPGYGTGYFQYGLPDLVPDPYYIQASTYVQKMAMYNLRCAAEENCLASSAYRXDVRDYDHRVLLRFPQRVKNQGTSDFLPSRPRYSWEWHSCHQHYHSMDEFSHYDLLDASTQRRVAEGHKASFCLEDTSCDYGYHRRFACTAHTQGLSPGCYDTYNADIDCQWIDITDVKPGNYILKVSVNPSYLVPESDYSNNVVRCEIRYTGHHAYASGCTISPY.

The signal sequence occupies residues 1–20; it reads MRFAWTALLGSLQLCALVRC. A propeptide spans 21–169 (removed by BMP1); sequence APPAASHRQP…NRVEVDGMVG (149 aa). The disordered stretch occupies residues 63 to 84; sequence YQPQRRRDPGATAPGAANATAP. The span at 72 to 84 shows a compositional bias: low complexity; the sequence is GATAPGAANATAP. N-linked (GlcNAc...) asparagine glycans are attached at residues Asn80, Asn96, and Asn143. Positions 130-175 are disordered; it reads TSGAHDAGTSRADNQTAPGEVPTLSNLRPPNRVEVDGMVGDDPYNP. Polar residues predominate over residues 140–157; that stretch reads RADNQTAPGEVPTLSNLR. At Tyr188 the chain carries Sulfotyrosine. The segment at 214–418 is lysyl-oxidase like; sequence PDLVPDPYYI…YASGCTISPY (205 aa). Cystine bridges form between Cys239/Cys245, Cys292/Cys341, Cys325/Cys331, Cys352/Cys362, and Cys399/Cys413. Residues His293, His295, and His297 each contribute to the Cu cation site. The segment at residues 321 to 356 is a cross-link (lysine tyrosylquinone (Lys-Tyr)); the sequence is KASFCLEDTSCDYGYHRRFACTAHTQGLSPGCYDTY. 2',4',5'-topaquinone is present on Tyr356.

The protein belongs to the lysyl oxidase family. In terms of assembly, interacts with MFAP4. Interacts (via propeptide) with EFEMP2; this interaction is strong and facilitates formation of ternary complexes with ELN during elastic fiber assembly; this interaction limits interaction of EFEMP2 with FBLN5. Requires Cu cation as cofactor. Lysine tyrosylquinone residue serves as cofactor. Post-translationally, the lysine tyrosylquinone cross-link (LTQ) is generated by condensation of the epsilon-amino group of a lysine with a topaquinone produced by oxidation of tyrosine. Proteolytically cleaved by BMP1 which removes the propeptide. Also proteolytically cleaved by ADAMTS2 and ADAMTS14, but not by ADAMTS3, at an additional cleavage site downstream of the BMP1 cleavage site. The propeptide plays a role in directing the deposition of this enzyme to elastic fibers, via interaction with tropoelastin. Cleavage by BMP1 to remove the propeptide does not increase enzymatic activity but increases binding to collagen. Cleavage by ADAMTS2 produces a form with reduced collagen-binding activity. In terms of processing, sulfated at Tyr-188 and also at either Tyr-184 or Tyr-185 which enhances binding to collagen.

It is found in the secreted. The protein localises to the extracellular space. The catalysed reaction is L-lysyl-[protein] + O2 + H2O = (S)-2-amino-6-oxohexanoyl-[protein] + H2O2 + NH4(+). In terms of biological role, responsible for the post-translational oxidative deamination of peptidyl lysine residues in precursors to fibrous collagen and elastin. Regulator of Ras expression. May play a role in tumor suppression. Plays a role in the aortic wall architecture. The sequence is that of Protein-lysine 6-oxidase from Bos taurus (Bovine).